Here is a 510-residue protein sequence, read N- to C-terminus: NAD(P)H-quinone oxidoreductase subunit 2 B, chloroplastic (510 aa).

13 helical membrane-spanning segments follow: residues 24–44, 57–77, 99–119, 124–144, 149–169, 183–203, 227–247, 295–315, 323–343, 354–374, 395–415, 418–438, and 484–504; these read LLLF…GLIL, IPWL…ALLF, IFQF…VEYI, MAIT…MFLC, LITI…LSGY, YLLM…WLYG, PGIS…LSPA, WHLL…LIAI, MLAY…IVGD, YMLF…LFGL, ALSL…AGFF, LYLF…IGLL, and MIVC…IIAI.

The protein belongs to the complex I subunit 2 family. As to quaternary structure, NDH is composed of at least 16 different subunits, 5 of which are encoded in the nucleus.

It is found in the plastid. Its subcellular location is the chloroplast thylakoid membrane. The enzyme catalyses a plastoquinone + NADH + (n+1) H(+)(in) = a plastoquinol + NAD(+) + n H(+)(out). It catalyses the reaction a plastoquinone + NADPH + (n+1) H(+)(in) = a plastoquinol + NADP(+) + n H(+)(out). NDH shuttles electrons from NAD(P)H:plastoquinone, via FMN and iron-sulfur (Fe-S) centers, to quinones in the photosynthetic chain and possibly in a chloroplast respiratory chain. The immediate electron acceptor for the enzyme in this species is believed to be plastoquinone. Couples the redox reaction to proton translocation, and thus conserves the redox energy in a proton gradient. The protein is NAD(P)H-quinone oxidoreductase subunit 2 B, chloroplastic of Helianthus annuus (Common sunflower).